Here is a 569-residue protein sequence, read N- to C-terminus: MICSIMGGLRSLRAARPYSHQSNTETKHMGLVGVASLLVLVADCTIFASGLSSSTRSRESQTLSASTSGNPFQANVEMKTFMERFNLTHHHQSGIYVDLGQDKEVDGTLYREPAGLCPIWGKHIELQQPDRPPYRNNFLEDVPTEKEYKQSGNPLPGGFNLNFVTPSGQRISPFPMELLEKNSNIKASTDLGRCAEFAFKTVAMDKNNKATKYRYPFVYDSKKRLCHILYVSMQLMEGKKYCSVKGEPPDLTWYCFKPRKSVTENHHLIYGSAYVGENPDAFISKCPNQALRGYRFGVWKKGRCLDYTELTDTVIERVESKAQCWVKTFENDGVASDQPHTYPLTSQASWNDWWPLHQSDQPHSGGVGRNYGFYYVDTTGEGKCALSDQVPDCLVSDSAAVSYTAAGSLSEETPNFIIPSNPSVTPPTPETALQCTADKFPDSFGACDVQACKRQKTSCVGGQIQSTSVDCTADEQNECGSNTALIAGLAVGGVLLLALLGGGCYFAKRLDRNKGVQAAHHEHEFQSDRGARKKRPSDLMQEAEPSFWDEAEENIEQDGETHVMVEGDY.

An N-terminal signal peptide occupies residues 1–48 (MICSIMGGLRSLRAARPYSHQSNTETKHMGLVGVASLLVLVADCTIFA). Residues 49-66 (SGLSSSTRSRESQTLSAS) constitute a propeptide, removed in mature form; required for microneme targeting of the proprotein. Residues 49–483 (SGLSSSTRSR…DEQNECGSNT (435 aa)) lie on the Extracellular side of the membrane. Residues 67 to 287 (TSGNPFQANV…NPDAFISKCP (221 aa)) form a DI region. The N-linked (GlcNAc...) asparagine glycan is linked to Asn86. 8 disulfide bridges follow: Cys117–Cys286, Cys194–Cys226, Cys242–Cys255, Cys304–Cys393, Cys324–Cys384, Cys435–Cys459, Cys447–Cys471, and Cys452–Cys479. The tract at residues 288–415 (NQALRGYRFG…AGSLSEETPN (128 aa)) is DII. Residues 416–487 (FIIPSNPSVT…ECGSNTALIA (72 aa)) are DIII. Residues 484 to 504 (ALIAGLAVGGVLLLALLGGGC) form a helical membrane-spanning segment. Topologically, residues 505–569 (YFAKRLDRNK…ETHVMVEGDY (65 aa)) are cytoplasmic. Positions 518-530 (AAHHEHEFQSDRG) are enriched in basic and acidic residues. Positions 518–548 (AAHHEHEFQSDRGARKKRPSDLMQEAEPSFW) are disordered.

It belongs to the apicomplexan parasites AMA1 family. In terms of assembly, component of the moving junction (MJ) complex, composed of AMA1, a transmembrane protein on the parasite surface, and a complex of the rhoptry neck proteins RON2, RON4, RON5 and RON8 localized to the cytoplasmic face of the host plasma membrane. Interacts (via ectodomain) with RON2 (via C-terminus); RON2 serves as the receptor for AMA1 on the host plasma membrane. AMA1 and the RON proteins are initially in distinct compartments within the parasite, namely the micronemes and the rhoptries, and interaction happens only upon initiation of invasion when the micronemes and rhoptries discharge. In terms of processing, proteolytically cleaved during invasion within its transmembrane domain, releasing a soluble form from the tachyzoite surface. The cytosolic tail generated by ROM4 cleavage during invasion may trigger parasite replication within the parasitophorous vacuole.

It is found in the cell membrane. It localises to the secreted. Essential microneme protein that plays an important role in host cell invasion. Part of the moving junction (MJ) complex, a ringlike structure formed between the plasma membranes of the apical tip of the parasite and the target host cell. During invasion, the MJ migrates from the anterior to the posterior of the parasite, leading to internalization of the parasite into a parasitophorous vacuole (PV). This chain is Apical membrane antigen 1 (AMA1), found in Toxoplasma gondii (strain ATCC 50861 / VEG).